Consider the following 268-residue polypeptide: Undecaprenyl-diphosphatase (268 aa).

The next 7 membrane-spanning stretches (helical) occupy residues 7–27 (IFNA…PISS), 87–107 (LIYH…LCIY), 116–136 (FYSI…TEIS), 146–166 (IETP…WPGF), 187–207 (VEFS…LDVI), 210–230 (FYDI…SAFI), and 247–267 (SLIP…LFFM).

It belongs to the UppP family.

The protein resides in the cell membrane. It catalyses the reaction di-trans,octa-cis-undecaprenyl diphosphate + H2O = di-trans,octa-cis-undecaprenyl phosphate + phosphate + H(+). Functionally, catalyzes the dephosphorylation of undecaprenyl diphosphate (UPP). Confers resistance to bacitracin. This is Undecaprenyl-diphosphatase from Buchnera aphidicola subsp. Baizongia pistaciae (strain Bp).